The chain runs to 785 residues: MSCSCLCMSLYRGADRIGRFYTAHCPQDMALCMHRQKLNPLALALAAAFALNAPAALADDEEPPIAVPAPPKEPGQTVVHADDMDGEMSVILHAKGNVVATRDDQRVESDWLDYYQTKNRVKAGDRFRMTRGGDVITGTTLDYNVDTYSGTGMDPVFSMARQNQTAVKPAPGAPPAKPVTLRGDGSQVDFQGQNQYRVYGSRMTTCDPGDEAWYLKSSRTDLDYNTGVGVAHNAWMQFYGVPILYSPWLDFPLNSNRKSGFLMPTFKTGSSGTEFSLPYYWNIAPNYDATITPHINVKHGNMLAGEFRYLQPDYSGRIYTEQLPKDKLTGESRYAWSASHSQNFGHGLSFGMDFNQVSDNNYFTDFGDQVAIASNVNLNREAWLNYALGWQGGGGNVTLRAQRYQNLTINPVPGDIPYAKMPQLTFNANQSLPSGFSANLISDLTRFDHPSLQNAERLVLYPSVSWNFDRSWGFLRPKLGVNYTHYNLDAFQGSPSHVQTRTLPIFSTDAGLYFDRDTQFLGRDHLMTLEPRLFYVNIPNNRDQNSLPMFDTSVNDINFAQLFTENRYSGYDRINGANQITTALTSRFIDQSNGLERLRLAVGKRFYLKDDVTQTVNQPSSDLLLSAGGDLTREWRFDSSYQYNQQLGMTERYNAQLRYNPAAGKIASVRYRFGRYEQLDNSNNYGPMRQVDVAAQWPIARRWYAIGRYNYSFIERKPIERLAGFEYNDGCWSLRMYSQRYVTDPTTTKNAWFFQLELKGLGALGNNGVQDTLRLAVPGYTKINE.

The N-terminal stretch at 1-58 (MSCSCLCMSLYRGADRIGRFYTAHCPQDMALCMHRQKLNPLALALAAAFALNAPAALA) is a signal peptide.

Belongs to the LptD family. As to quaternary structure, component of the lipopolysaccharide transport and assembly complex. Interacts with LptE and LptA.

Its subcellular location is the cell outer membrane. In terms of biological role, together with LptE, is involved in the assembly of lipopolysaccharide (LPS) at the surface of the outer membrane. This is LPS-assembly protein LptD from Chromobacterium violaceum (strain ATCC 12472 / DSM 30191 / JCM 1249 / CCUG 213 / NBRC 12614 / NCIMB 9131 / NCTC 9757 / MK).